A 284-amino-acid chain; its full sequence is Shikimate kinase (284 aa).

85–95 (PLAAGLKSSSA) is a binding site for ATP.

The protein belongs to the GHMP kinase family. Archaeal shikimate kinase subfamily.

The protein localises to the cytoplasm. The catalysed reaction is shikimate + ATP = 3-phosphoshikimate + ADP + H(+). It functions in the pathway metabolic intermediate biosynthesis; chorismate biosynthesis; chorismate from D-erythrose 4-phosphate and phosphoenolpyruvate: step 5/7. The protein is Shikimate kinase of Halobacterium salinarum (strain ATCC 29341 / DSM 671 / R1).